The sequence spans 230 residues: Ribonuclease HII (230 aa).

One can recognise an RNase H type-2 domain in the interval 28–217 (FRIAGIDEAG…VKEHLPSQPD (190 aa)). Residues D34, E35, and D126 each contribute to the a divalent metal cation site. The disordered stretch occupies residues 209–230 (KEHLPSQPDSDTAGPSTGLFSF). Residues 215-230 (QPDSDTAGPSTGLFSF) are compositionally biased toward polar residues.

This sequence belongs to the RNase HII family. Mn(2+) serves as cofactor. Mg(2+) is required as a cofactor.

The protein resides in the cytoplasm. It catalyses the reaction Endonucleolytic cleavage to 5'-phosphomonoester.. Its function is as follows. Endonuclease that specifically degrades the RNA of RNA-DNA hybrids. This Citrifermentans bemidjiense (strain ATCC BAA-1014 / DSM 16622 / JCM 12645 / Bem) (Geobacter bemidjiensis) protein is Ribonuclease HII.